The primary structure comprises 283 residues: Myeloid differentiation primary response protein MyD88-B (283 aa).

Residues 27–105 (RLCLYLNPNA…DILTDLAPLI (79 aa)) enclose the Death domain. The segment at 106–143 (EADCKKYLEKKHGPLPLQDDNVDSSEQYRITKSDDPYG) is intermediate domain. The TIR domain maps to 147-281 (ETFDAFICCC…WFWDKLAKAL (135 aa)).

Its subcellular location is the cytoplasm. Adapter protein involved in the Toll-like receptor and IL-1 receptor signaling pathway in the innate immune response. Activates expression of target genes in the Spemann organizer region during early embryonic development. Is required for normal axis formation. The protein is Myeloid differentiation primary response protein MyD88-B (myd88-b) of Xenopus laevis (African clawed frog).